The following is a 256-amino-acid chain: Thiazole synthase (256 aa).

K98 (schiff-base intermediate with DXP) is an active-site residue. 1-deoxy-D-xylulose 5-phosphate is bound by residues G159, 185–186 (AG), and 207–208 (NT).

Belongs to the ThiG family. Homotetramer. Forms heterodimers with either ThiH or ThiS.

Its subcellular location is the cytoplasm. The enzyme catalyses [ThiS sulfur-carrier protein]-C-terminal-Gly-aminoethanethioate + 2-iminoacetate + 1-deoxy-D-xylulose 5-phosphate = [ThiS sulfur-carrier protein]-C-terminal Gly-Gly + 2-[(2R,5Z)-2-carboxy-4-methylthiazol-5(2H)-ylidene]ethyl phosphate + 2 H2O + H(+). The protein operates within cofactor biosynthesis; thiamine diphosphate biosynthesis. Catalyzes the rearrangement of 1-deoxy-D-xylulose 5-phosphate (DXP) to produce the thiazole phosphate moiety of thiamine. Sulfur is provided by the thiocarboxylate moiety of the carrier protein ThiS. In vitro, sulfur can be provided by H(2)S. The sequence is that of Thiazole synthase (thiG) from Bacillus subtilis (strain 168).